A 491-amino-acid chain; its full sequence is Glutamyl-tRNA(Gln) amidotransferase subunit A (491 aa).

Active-site charge relay system residues include K77 and S152. The active-site Acyl-ester intermediate is the S176.

It belongs to the amidase family. GatA subfamily. In terms of assembly, heterotrimer of A, B and C subunits.

It catalyses the reaction L-glutamyl-tRNA(Gln) + L-glutamine + ATP + H2O = L-glutaminyl-tRNA(Gln) + L-glutamate + ADP + phosphate + H(+). Its function is as follows. Allows the formation of correctly charged Gln-tRNA(Gln) through the transamidation of misacylated Glu-tRNA(Gln) in organisms which lack glutaminyl-tRNA synthetase. The reaction takes place in the presence of glutamine and ATP through an activated gamma-phospho-Glu-tRNA(Gln). This chain is Glutamyl-tRNA(Gln) amidotransferase subunit A, found in Chlamydia abortus (strain DSM 27085 / S26/3) (Chlamydophila abortus).